The chain runs to 28 residues: Short cationic peptide-1b (28 aa).

Glutamate 28 is modified (glutamic acid 1-amide).

As to expression, expressed by the venom gland.

The protein resides in the secreted. This Cupiennius salei (American wandering spider) protein is Short cationic peptide-1b.